We begin with the raw amino-acid sequence, 210 residues long: Urease accessory protein UreF (210 aa).

It belongs to the UreF family. In terms of assembly, ureD, UreF and UreG form a complex that acts as a GTP-hydrolysis-dependent molecular chaperone, activating the urease apoprotein by helping to assemble the nickel containing metallocenter of UreC. The UreE protein probably delivers the nickel.

Its subcellular location is the cytoplasm. Its function is as follows. Required for maturation of urease via the functional incorporation of the urease nickel metallocenter. The sequence is that of Urease accessory protein UreF from Cereibacter sphaeroides (strain ATCC 17029 / ATH 2.4.9) (Rhodobacter sphaeroides).